We begin with the raw amino-acid sequence, 142 residues long: Antirestriction protein KlcA (142 aa).

Belongs to the antirestriction protein family.

Could be involved in overcoming restriction barriers during establishment after conjugative transfer. This Escherichia coli protein is Antirestriction protein KlcA (klcA).